The primary structure comprises 560 residues: DNA ligase B (560 aa).

The active-site N6-AMP-lysine intermediate is the Lys-124.

This sequence belongs to the NAD-dependent DNA ligase family. LigB subfamily.

It catalyses the reaction NAD(+) + (deoxyribonucleotide)n-3'-hydroxyl + 5'-phospho-(deoxyribonucleotide)m = (deoxyribonucleotide)n+m + AMP + beta-nicotinamide D-nucleotide.. In terms of biological role, catalyzes the formation of phosphodiester linkages between 5'-phosphoryl and 3'-hydroxyl groups in double-stranded DNA using NAD as a coenzyme and as the energy source for the reaction. In Escherichia coli (strain SMS-3-5 / SECEC), this protein is DNA ligase B.